The primary structure comprises 176 residues: Adenine phosphoribosyltransferase (176 aa).

This sequence belongs to the purine/pyrimidine phosphoribosyltransferase family. As to quaternary structure, homodimer.

It is found in the cytoplasm. The enzyme catalyses AMP + diphosphate = 5-phospho-alpha-D-ribose 1-diphosphate + adenine. It participates in purine metabolism; AMP biosynthesis via salvage pathway; AMP from adenine: step 1/1. Its function is as follows. Catalyzes a salvage reaction resulting in the formation of AMP, that is energically less costly than de novo synthesis. This Thermobifida fusca (strain YX) protein is Adenine phosphoribosyltransferase.